The primary structure comprises 342 residues: Glucokinase (342 aa).

Residue 7 to 12 participates in ATP binding; that stretch reads GDIGGT.

Belongs to the bacterial glucokinase family.

The protein localises to the cytoplasm. It carries out the reaction D-glucose + ATP = D-glucose 6-phosphate + ADP + H(+). This is Glucokinase from Trichormus variabilis (strain ATCC 29413 / PCC 7937) (Anabaena variabilis).